Here is a 23-residue protein sequence, read N- to C-terminus: KAEEEVEKNKEEAEEKAEKKIAE.

Positions 1–23 are disordered; it reads KAEEEVEKNKEEAEEKAEKKIAE. Basic and acidic residues predominate over residues 7–23; sequence EKNKEEAEEKAEKKIAE.

Functionally, gp22 functions in head assembly. In terms of biological role, internal peptide VII: Cleavage product of Gp22 that is incorporated into the mature phage head. The protein is Major prohead-scaffolding core protein Gp22 (22) of Enterobacteria phage T6 (Bacteriophage T6).